Consider the following 674-residue polypeptide: DNA ligase (674 aa).

NAD(+) is bound by residues 42–46 (DNVYD), 91–92 (SM), and E121. Residue K123 is the N6-AMP-lysine intermediate of the active site. R144, E178, K294, and K318 together coordinate NAD(+). Zn(2+)-binding residues include C412, C415, C430, and C435. A BRCT domain is found at 596 to 674 (VKDSFVAGKT…ETELLANLKD (79 aa)).

This sequence belongs to the NAD-dependent DNA ligase family. LigA subfamily. Mg(2+) serves as cofactor. Requires Mn(2+) as cofactor.

It catalyses the reaction NAD(+) + (deoxyribonucleotide)n-3'-hydroxyl + 5'-phospho-(deoxyribonucleotide)m = (deoxyribonucleotide)n+m + AMP + beta-nicotinamide D-nucleotide.. DNA ligase that catalyzes the formation of phosphodiester linkages between 5'-phosphoryl and 3'-hydroxyl groups in double-stranded DNA using NAD as a coenzyme and as the energy source for the reaction. It is essential for DNA replication and repair of damaged DNA. This chain is DNA ligase, found in Lacticaseibacillus paracasei (strain ATCC 334 / BCRC 17002 / CCUG 31169 / CIP 107868 / KCTC 3260 / NRRL B-441) (Lactobacillus paracasei).